We begin with the raw amino-acid sequence, 480 residues long: Glycogen synthase (480 aa).

Position 15 (Lys15) interacts with ADP-alpha-D-glucose.

Belongs to the glycosyltransferase 1 family. Bacterial/plant glycogen synthase subfamily.

It carries out the reaction [(1-&gt;4)-alpha-D-glucosyl](n) + ADP-alpha-D-glucose = [(1-&gt;4)-alpha-D-glucosyl](n+1) + ADP + H(+). The protein operates within glycan biosynthesis; glycogen biosynthesis. Synthesizes alpha-1,4-glucan chains using ADP-glucose. In Clostridioides difficile (strain 630) (Peptoclostridium difficile), this protein is Glycogen synthase.